Here is a 205-residue protein sequence, read N- to C-terminus: Regulator of G-protein signaling 4 (205 aa).

Residues Cys2, Cys12, and Cys95 are each lipidated (S-palmitoyl cysteine). The RGS domain maps to 62–178; that stretch reads SLENLINHEC…LKSRFYLDLT (117 aa).

In terms of processing, either Cys-2 or Cys-12 or both are palmitoylated. Post-translationally, phosphorylated by cyclic GMP-dependent protein kinase.

Inhibits signal transduction by increasing the GTPase activity of G protein alpha subunits thereby driving them into their inactive GDP-bound form. Activity on G(z)-alpha is inhibited by phosphorylation of the G-protein. Activity on G(z)-alpha and G(i)-alpha-1 is inhibited by palmitoylation of the G-protein. This Rattus norvegicus (Rat) protein is Regulator of G-protein signaling 4 (Rgs4).